The primary structure comprises 275 residues: Large ribosomal subunit protein uL2 (275 aa).

Residues 212–275 form a disordered region; the sequence is NRHRGIRPQT…DKLIISRRKK (64 aa). Residues 257–275 are compositionally biased toward basic residues; it reads YKTRRKKPSDKLIISRRKK.

Belongs to the universal ribosomal protein uL2 family. In terms of assembly, part of the 50S ribosomal subunit. Forms a bridge to the 30S subunit in the 70S ribosome.

Functionally, one of the primary rRNA binding proteins. Required for association of the 30S and 50S subunits to form the 70S ribosome, for tRNA binding and peptide bond formation. It has been suggested to have peptidyltransferase activity; this is somewhat controversial. Makes several contacts with the 16S rRNA in the 70S ribosome. This chain is Large ribosomal subunit protein uL2, found in Nitratiruptor sp. (strain SB155-2).